Here is a 655-residue protein sequence, read N- to C-terminus: Probable potassium transport system protein Kup (655 aa).

12 consecutive transmembrane segments (helical) span residues 19–39, 42–62, 102–122, 132–152, 161–181, 214–234, 246–266, 282–302, 338–358, 370–390, 395–415, and 420–440; these read GLLISLGIIYGDIGTSPLYVM, IAGGNVISENLILGGLSCVFW, VWPAMIGGAAMLADGIITPPI, LIFNKDIPTIPIVLAIIVMLF, IVGKFFGPIMFIWFAMLATLG, SGFWLLGAVFLCTTGAEALYS, ISWIFVKLALLINYFGQGAWI, IMPEWFIVYGIIIATMAAIIA, LFIPSINLLLLAGCIFVVLWF, LAINITFLMTTILLAYYLLII, FIWVGLLILMYLIIEVSFLVA, and FFHGGYFTLISSGILAFIMII.

Belongs to the HAK/KUP transporter (TC 2.A.72) family.

The protein localises to the cell inner membrane. It carries out the reaction K(+)(in) + H(+)(in) = K(+)(out) + H(+)(out). Its function is as follows. Transport of potassium into the cell. Likely operates as a K(+):H(+) symporter. In Cytophaga hutchinsonii (strain ATCC 33406 / DSM 1761 / CIP 103989 / NBRC 15051 / NCIMB 9469 / D465), this protein is Probable potassium transport system protein Kup.